A 109-amino-acid polypeptide reads, in one-letter code: Beta-keratin-related protein (109 aa).

Ser-2 is subject to N-acetylserine.

Belongs to the avian keratin family.

The chain is Beta-keratin-related protein (BKJ) from Coturnix japonica (Japanese quail).